The chain runs to 908 residues: Glutamate receptor ionotropic, kainate 2 (908 aa).

Positions 1–31 (MKIIFPILSNPVFRRTVKLLLCLLWIGYSQG) are cleaved as a signal peptide. At 32–561 (TTHVLRFGGI…VFSFLNPLSP (530 aa)) the chain is on the extracellular side. 7 N-linked (GlcNAc...) asparagine glycosylation sites follow: asparagine 67, asparagine 73, asparagine 275, asparagine 378, asparagine 412, asparagine 423, and asparagine 430. Cysteines 96 and 347 form a disulfide. The L-glutamate site is built by proline 516, alanine 518, and arginine 523. An N-linked (GlcNAc...) asparagine glycan is attached at asparagine 546. A helical transmembrane segment spans residues 562 to 582 (DIWMYILLAYLGVSCVLFVIA). Over 583-635 (RFSPYEWYNPHPCNPDSDVVENNFTLLNSFWFGVGALMQQGSELMPKALSTRI) the chain is Cytoplasmic. A helical transmembrane segment spans residues 636–656 (VGGIWWFFTLIIISSYTANLA). At 657 to 819 (AFLTVERMES…KEASALGVQN (163 aa)) the chain is on the extracellular side. Positions 689, 690, and 738 each coordinate L-glutamate. A disulfide bridge connects residues cysteine 750 and cysteine 804. Residue asparagine 751 is glycosylated (N-linked (GlcNAc...) asparagine). The chain crosses the membrane as a helical span at residues 820 to 840 (IGGIFIVLAAGLVLSVFVAVG). Topologically, residues 841 to 908 (EFLYKSKKNA…RRLPGKETMA (68 aa)) are cytoplasmic. Phosphoserine; by PKC is present on residues serine 846 and serine 868. Residue lysine 886 forms a Glycyl lysine isopeptide (Lys-Gly) (interchain with G-Cter in SUMO1) linkage.

This sequence belongs to the glutamate-gated ion channel (TC 1.A.10.1) family. GRIK2 subfamily. In terms of assembly, homotetramer and heterotetramer with GRIK5. Tetramers may be formed by the dimerization of dimers. Assembles into a kainate-gated homomeric channel that does not bind AMPA. Can form functional heteromeric receptors with GRIK5. Can form functional heteromeric receptors with GRIK3 and GRIK4. Interacts with DLG4. Interacts with NETO2. Interacts (via C-terminus) with KLHL17 (via kelch repeats); the interaction targets GRIK2 for degradation via ubiquitin-proteasome pathway. Post-translationally, sumoylation mediates kainate receptor-mediated endocytosis and regulates synaptic transmission. Sumoylation is enhanced by PIAS3 and desumoylated by SENP1. In terms of processing, ubiquitinated. Ubiquitination regulates the GRIK2 levels at the synapse by leading kainate receptor degradation through proteasome. Phosphorylated by PKC at Ser-868 upon agonist activation, this directly enhance sumoylation. In terms of tissue distribution, expression is higher in cerebellum than in cerebral cortex.

The protein resides in the cell membrane. It localises to the postsynaptic cell membrane. The enzyme catalyses Ca(2+)(in) = Ca(2+)(out). The catalysed reaction is Na(+)(in) = Na(+)(out). With respect to regulation, cold receptor activity activated by temperatures between 10-19 degrees Celsius. In terms of biological role, ionotropic glutamate receptor that functions as a cation permeable ligand-gated ion channel, gated by L-glutamate and the glutamatergic agonist kainic acid. L-glutamate acts as an excitatory neurotransmitter at many synapses in the central nervous system. Binding of the excitatory neurotransmitter L-glutamate induces a conformation change, leading to the opening of the cation channel, and thereby converts the chemical signal to an electrical impulse. The receptor then desensitizes rapidly and enters a transient inactive state, characterized by the presence of bound agonist. Modulates cell surface expression of NETO2. In association with GRIK3, involved in presynaptic facilitation of glutamate release at hippocampal mossy fiber synapses. Its function is as follows. Independent of its ionotropic glutamate receptor activity, acts as a thermoreceptor conferring sensitivity to cold temperatures. Functions in dorsal root ganglion neurons. This is Glutamate receptor ionotropic, kainate 2 (GRIK2) from Homo sapiens (Human).